The chain runs to 243 residues: Tyrosine recombinase XerD-like (243 aa).

The region spanning 1–72 (MKQAIESFIQ…AVNQFLYFLY (72 aa)) is the Core-binding (CB) domain. Positions 91–243 (SVKKKLERED…KTSMSLEKFR (153 aa)) constitute a Tyr recombinase domain. Active-site residues include Lys149 and Arg210.

It belongs to the 'phage' integrase family. XerD-like subfamily.

The protein resides in the cytoplasm. In terms of biological role, putative tyrosine recombinase. Not involved in the cutting and rejoining of the recombining DNA molecules on dif(SL) site. This chain is Tyrosine recombinase XerD-like, found in Streptococcus suis (strain 98HAH33).